We begin with the raw amino-acid sequence, 295 residues long: Diaminopimelate epimerase (295 aa).

Residues Asn-13 and Asn-69 each contribute to the substrate site. Cys-78 functions as the Proton donor in the catalytic mechanism. Substrate-binding positions include Gly-79 to Asn-80, Asn-173, Asn-212, and Glu-230 to Arg-231. Cys-239 serves as the catalytic Proton acceptor. Gly-240–Thr-241 is a binding site for substrate.

Belongs to the diaminopimelate epimerase family. Homodimer.

Its subcellular location is the cytoplasm. It catalyses the reaction (2S,6S)-2,6-diaminopimelate = meso-2,6-diaminopimelate. It participates in amino-acid biosynthesis; L-lysine biosynthesis via DAP pathway; DL-2,6-diaminopimelate from LL-2,6-diaminopimelate: step 1/1. Catalyzes the stereoinversion of LL-2,6-diaminopimelate (L,L-DAP) to meso-diaminopimelate (meso-DAP), a precursor of L-lysine. The sequence is that of Diaminopimelate epimerase from Methanococcus aeolicus (strain ATCC BAA-1280 / DSM 17508 / OCM 812 / Nankai-3).